Here is a 176-residue protein sequence, read N- to C-terminus: Peptide deformylase (176 aa).

Positions 94 and 136 each coordinate Fe cation. Glutamate 137 is a catalytic residue. Residue histidine 140 participates in Fe cation binding.

Belongs to the polypeptide deformylase family. The cofactor is Fe(2+).

It carries out the reaction N-terminal N-formyl-L-methionyl-[peptide] + H2O = N-terminal L-methionyl-[peptide] + formate. In terms of biological role, removes the formyl group from the N-terminal Met of newly synthesized proteins. Requires at least a dipeptide for an efficient rate of reaction. N-terminal L-methionine is a prerequisite for activity but the enzyme has broad specificity at other positions. This Bartonella henselae (strain ATCC 49882 / DSM 28221 / CCUG 30454 / Houston 1) (Rochalimaea henselae) protein is Peptide deformylase.